The sequence spans 270 residues: Centromere protein Q (270 aa).

Positions 1–59 (MSGKANTSKKKSQRVKRNVKQRADKEDEELDSPENKVGNRAKRNRSHAGHLSSKEQTKC) are disordered. Basic residues-rich tracts occupy residues 7 to 20 (TSKKKSQRVKRNVK) and 39 to 48 (NRAKRNRSHA). Position 52 is a phosphoserine (Ser52). A coiled-coil region spans residues 143 to 205 (LKVEREQERA…EEEMKEVFHI (63 aa)).

This sequence belongs to the CENP-Q/OKP1 family. Component of the CENPA-CAD complex, composed of CENPI, CENPK, CENPL, CENPO, CENPP, CENPQ, CENPR and CENPS. The CENPA-CAD complex interacts with the CENPA-NAC complex, at least composed of CENPA, CENPC, CENPH, CENPM, CENPN, CENPT and CENPU. In terms of processing, phosphorylation at Ser-52 is essential for CENPE recruitment to kinetochores and orderly chromosome congression.

The protein resides in the nucleus. Its subcellular location is the chromosome. The protein localises to the centromere. Its function is as follows. Component of the CENPA-CAD (nucleosome distal) complex, a complex recruited to centromeres which is involved in assembly of kinetochore proteins, mitotic progression and chromosome segregation. May be involved in incorporation of newly synthesized CENPA into centromeres via its interaction with the CENPA-NAC complex. Plays an important role in chromosome congression and in the recruitment of CENP-O complex (which comprises CENPO, CENPP, CENPQ and CENPU), CENPE and PLK1 to the kinetochores. The protein is Centromere protein Q (Cenpq) of Rattus norvegicus (Rat).